The chain runs to 397 residues: Phosphoglycerate kinase (397 aa).

Substrate is bound by residues 21–23, Arg37, 60–63, Arg119, and Arg152; these read DFN and HLGR. ATP is bound by residues Lys203, Gly294, Glu325, and 354–357; that span reads GGDS.

It belongs to the phosphoglycerate kinase family. As to quaternary structure, monomer.

The protein resides in the cytoplasm. It catalyses the reaction (2R)-3-phosphoglycerate + ATP = (2R)-3-phospho-glyceroyl phosphate + ADP. Its pathway is carbohydrate degradation; glycolysis; pyruvate from D-glyceraldehyde 3-phosphate: step 2/5. The polypeptide is Phosphoglycerate kinase (Chlorobium limicola (strain DSM 245 / NBRC 103803 / 6330)).